Consider the following 309-residue polypeptide: Probable manganese-dependent inorganic pyrophosphatase (309 aa).

6 residues coordinate Mn(2+): His-9, Asp-13, Asp-15, Asp-75, His-97, and Asp-149.

The protein belongs to the PPase class C family. Requires Mn(2+) as cofactor.

It localises to the cytoplasm. The enzyme catalyses diphosphate + H2O = 2 phosphate + H(+). The protein is Probable manganese-dependent inorganic pyrophosphatase of Staphylococcus epidermidis (strain ATCC 35984 / DSM 28319 / BCRC 17069 / CCUG 31568 / BM 3577 / RP62A).